We begin with the raw amino-acid sequence, 168 residues long: UPF0262 protein BRADO6636 (168 aa).

The protein belongs to the UPF0262 family.

This is UPF0262 protein BRADO6636 from Bradyrhizobium sp. (strain ORS 278).